A 265-amino-acid polypeptide reads, in one-letter code: tRNA pseudouridine synthase A (265 aa).

The active-site Nucleophile is the Asp-58. Residue Tyr-116 participates in substrate binding.

Belongs to the tRNA pseudouridine synthase TruA family. In terms of assembly, homodimer.

It carries out the reaction uridine(38/39/40) in tRNA = pseudouridine(38/39/40) in tRNA. Formation of pseudouridine at positions 38, 39 and 40 in the anticodon stem and loop of transfer RNAs. The protein is tRNA pseudouridine synthase A of Neisseria meningitidis serogroup C / serotype 2a (strain ATCC 700532 / DSM 15464 / FAM18).